Consider the following 358-residue polypeptide: MTDTTSEQTERKLLDELYADFEDAGLIPLWTQVDGLMPMSPQPAAVPHLWRWAELLPIAQRSGELVPVGRGGERRAMALSNPGFPGLPYATPTLWTAIQYLGPREVAPSHRHSQGAFRFVVEGEGVWTNVDGDAVAMRRGDLLLTPSWAFHEHQNVTDEPMAWLDGLDIPLVSKLDAGFFEFGPDELSTRETPERSRGERLWGHPGLRPIGRPDQPNSPLNAYRWEHTDAALTAQLELEQEGVPGVLEPGHAGVRFSNPTTGRDALVTMRTEMRRLRAGTRTAPVRTVGSAIWQVFEGEAVARVGDKVFEIAKGDLFVVPSWCEVSLSARTQVDLFRFSDEPVYEALGLARTSRGEHK.

A Cupin type-2 domain is found at 99-165 (QYLGPREVAP…VTDEPMAWLD (67 aa)). The tract at residues 185–215 (DELSTRETPERSRGERLWGHPGLRPIGRPDQ) is disordered. Over residues 187 to 202 (LSTRETPERSRGERLW) the composition is skewed to basic and acidic residues.

This sequence belongs to the gentisate 1,2-dioxygenase family.

It carries out the reaction 2,5-dihydroxybenzoate + O2 = 3-maleylpyruvate + H(+). Involved in the degradation of salicylate via a pathway involving coenzyme A derivative. Catalyzes the oxygen-dependent ring fission of gentisate between the carboxyl and proximal hydroxyl groups at positions 1 and 2 of the aromatic ring to form maleylpyruvate. The substrate specificity is strong, since salicylate, catechol, protocatechuic acid, homogenetisate, 2,3-dihydroxybenzoate or 5-aminosalicylate cannot substitute for gentisate in the ring cleavage reaction. The sequence is that of Gentisate 1,2-dioxygenase from Streptomyces sp.